The sequence spans 285 residues: Foldase protein PrsA 2 (285 aa).

The signal sequence occupies residues 1 to 20; it reads MRGKHIFIITALISILMLAA. A lipid anchor (N-palmitoyl cysteine) is attached at Cys21. Cys21 carries the S-diacylglycerol cysteine lipid modification. In terms of domain architecture, PpiC spans 134 to 224; it reads KPEIKASHIL…NGYHIIKLTG (91 aa).

Belongs to the PrsA family.

The protein resides in the cell membrane. The enzyme catalyses [protein]-peptidylproline (omega=180) = [protein]-peptidylproline (omega=0). Plays a major role in protein secretion by helping the post-translocational extracellular folding of several secreted proteins. Important for the secretion of the protective antigen. The three PsrA proteins in this organism show different but overlapping substrate specificities. This Bacillus anthracis protein is Foldase protein PrsA 2 (prsA2).